An 813-amino-acid polypeptide reads, in one-letter code: Phenylalanine--tRNA ligase beta subunit (813 aa).

The region spanning 42–151 (AKDFNHVVIG…ADAPVGKAYA (110 aa)) is the tRNA-binding domain. The B5 domain occupies 405 to 480 (VKKAPVDITI…RLNGYEHIPE (76 aa)). Residues Asp-458, Asp-464, Glu-467, and Glu-468 each contribute to the Mg(2+) site. The FDX-ACB domain maps to 720–813 (SKFPIVERDF…LKKNFDLSVR (94 aa)).

It belongs to the phenylalanyl-tRNA synthetase beta subunit family. Type 1 subfamily. As to quaternary structure, tetramer of two alpha and two beta subunits. Mg(2+) serves as cofactor.

The protein localises to the cytoplasm. The catalysed reaction is tRNA(Phe) + L-phenylalanine + ATP = L-phenylalanyl-tRNA(Phe) + AMP + diphosphate + H(+). This chain is Phenylalanine--tRNA ligase beta subunit, found in Bdellovibrio bacteriovorus (strain ATCC 15356 / DSM 50701 / NCIMB 9529 / HD100).